A 268-amino-acid polypeptide reads, in one-letter code: ClpXP adapter protein SpxH (268 aa).

Belongs to the SpxH family. Interacts with Spx.

Its subcellular location is the cytoplasm. In terms of biological role, adapter protein required for efficient degradation of Spx by ClpXP under non-stress conditions. Interaction with Spx stabilizes Spx and exposes the C-terminus of Spx for recognition and proteolysis by ClpXP. This Staphylococcus aureus (strain Mu3 / ATCC 700698) protein is ClpXP adapter protein SpxH.